The following is a 207-amino-acid chain: uncharacterized protein (207 aa).

This sequence belongs to the methyltransferase superfamily.

This is an uncharacterized protein from Escherichia coli (strain K12).